The following is a 405-amino-acid chain: Threonine synthase (405 aa).

Lysine 104 carries the post-translational modification N6-(pyridoxal phosphate)lysine. Residues asparagine 130, 231 to 235, and threonine 369 each bind pyridoxal 5'-phosphate; that span reads GNAGN.

Belongs to the threonine synthase family. In terms of assembly, homotrimer. Pyridoxal 5'-phosphate serves as cofactor.

It catalyses the reaction O-phospho-L-homoserine + H2O = L-threonine + phosphate. It participates in amino-acid biosynthesis; L-threonine biosynthesis; L-threonine from L-aspartate: step 5/5. Catalyzes the gamma-elimination of phosphate from L-phosphohomoserine and the beta-addition of water to produce L-threonine. Does not catalyze the conversion of O-acetyl-L-homoserine into threonine. The protein is Threonine synthase (thrC) of Methanosarcina acetivorans (strain ATCC 35395 / DSM 2834 / JCM 12185 / C2A).